A 238-amino-acid polypeptide reads, in one-letter code: ATP synthase subunit a (238 aa).

5 consecutive transmembrane segments (helical) span residues 18-38, 76-96, 114-134, 166-186, and 193-213; these read LTLL…VFWA, YSLL…LGLF, NLAF…IEGV, SLAI…GLIV, and VYWW…SVFI.

Belongs to the ATPase A chain family. In terms of assembly, F-type ATPases have 2 components, CF(1) - the catalytic core - and CF(0) - the membrane proton channel. CF(1) has five subunits: alpha(3), beta(3), gamma(1), delta(1), epsilon(1). CF(0) has three main subunits: a(1), b(2) and c(9-12). The alpha and beta chains form an alternating ring which encloses part of the gamma chain. CF(1) is attached to CF(0) by a central stalk formed by the gamma and epsilon chains, while a peripheral stalk is formed by the delta and b chains.

Its subcellular location is the cell membrane. Its function is as follows. Key component of the proton channel; it plays a direct role in the translocation of protons across the membrane. The sequence is that of ATP synthase subunit a from Streptococcus pyogenes serotype M1.